We begin with the raw amino-acid sequence, 86 residues long: uncharacterized protein (86 aa).

An N-terminal signal peptide occupies residues 1–25; that stretch reads MNLRKILLSSALSLGMLVSAAPVLA.

This is an uncharacterized protein from Bacillus subtilis (strain 168).